Consider the following 125-residue polypeptide: Phosphoribosyl-AMP cyclohydrolase (125 aa).

Residue Asp74 participates in Mg(2+) binding. Cys75 is a binding site for Zn(2+). Positions 76 and 78 each coordinate Mg(2+). Positions 92 and 99 each coordinate Zn(2+).

Belongs to the PRA-CH family. Homodimer. Mg(2+) serves as cofactor. It depends on Zn(2+) as a cofactor.

The protein localises to the cytoplasm. It catalyses the reaction 1-(5-phospho-beta-D-ribosyl)-5'-AMP + H2O = 1-(5-phospho-beta-D-ribosyl)-5-[(5-phospho-beta-D-ribosylamino)methylideneamino]imidazole-4-carboxamide. Its pathway is amino-acid biosynthesis; L-histidine biosynthesis; L-histidine from 5-phospho-alpha-D-ribose 1-diphosphate: step 3/9. Catalyzes the hydrolysis of the adenine ring of phosphoribosyl-AMP. In Geobacter metallireducens (strain ATCC 53774 / DSM 7210 / GS-15), this protein is Phosphoribosyl-AMP cyclohydrolase.